Consider the following 1886-residue polypeptide: Polyprotein P3 (1886 aa).

3 disordered regions span residues 1–24 (MATR…SGVP), 420–466 (RCDS…MQDD), and 478–529 (RMKK…NQPE). The span at 9–20 (VTQTDGSRTATE) shows a compositional bias: polar residues. The span at 488 to 498 (QQALSSQAQEE) shows a compositional bias: low complexity. Residues 879-896 (CKCYICGQEGHYANQCRN) form a CCHC-type zinc finger. A Peptidase A2 domain is found at 1215–1292 (INAIVDTGAT…GLSPGIQMII (78 aa)). Residue D1220 is the For protease activity of the active site. The Reverse transcriptase domain occupies 1425–1615 (LLQMKVIRPS…PEIDFLGASL (191 aa)). The RNase H type-1 domain occupies 1706–1841 (KDSFIIIETD…ADALSRMINF (136 aa)). Residues D1715, E1758, D1784, and D1833 each contribute to the Mg(2+) site.

Polyprotein P3 is presumably proteolytically cleaved into several chains by viral protease.

It catalyses the reaction Endonucleolytic cleavage to 5'-phosphomonoester.. The enzyme catalyses DNA(n) + a 2'-deoxyribonucleoside 5'-triphosphate = DNA(n+1) + diphosphate. Its function is as follows. Capsid protein self assembles to form a bacilliform capsid about 90-900 nm in length. The capsid encapsulates the genomic dsDNA. Following virus entry into host cell, provides nuclear import of the viral genome. Virus particles do not enter the nucleus, but are targeted to the nuclear membrane through the interaction with host importins. This Commelina yellow mottle virus (CoYMV) protein is Polyprotein P3.